We begin with the raw amino-acid sequence, 215 residues long: Large ribosomal subunit protein bL25 (215 aa).

The segment at 160–215 (GDLPLPEGSELVTEPEETVMSVVAPETEEEPDTEEDEEGEEDVEEESEEEEEESEE) is disordered. Residues 185–215 (ETEEEPDTEEDEEGEEDVEEESEEEEEESEE) show a composition bias toward acidic residues.

Belongs to the bacterial ribosomal protein bL25 family. CTC subfamily. Part of the 50S ribosomal subunit; part of the 5S rRNA/L5/L18/L25 subcomplex. Contacts the 5S rRNA. Binds to the 5S rRNA independently of L5 and L18.

Functionally, this is one of the proteins that binds to the 5S RNA in the ribosome where it forms part of the central protuberance. This Natranaerobius thermophilus (strain ATCC BAA-1301 / DSM 18059 / JW/NM-WN-LF) protein is Large ribosomal subunit protein bL25.